We begin with the raw amino-acid sequence, 135 residues long: UPF0102 protein Aave_0630 (135 aa).

The segment at 1–21 (MGILEKKTAGPGGAARKTTTR) is disordered.

It belongs to the UPF0102 family.

The protein is UPF0102 protein Aave_0630 of Paracidovorax citrulli (strain AAC00-1) (Acidovorax citrulli).